Reading from the N-terminus, the 405-residue chain is S-adenosylmethionine synthase (405 aa).

Gly-139–Asp-144 serves as a coordination point for ATP.

This sequence belongs to the AdoMet synthase 2 family. The cofactor is Mg(2+).

The enzyme catalyses L-methionine + ATP + H2O = S-adenosyl-L-methionine + phosphate + diphosphate. It participates in amino-acid biosynthesis; S-adenosyl-L-methionine biosynthesis; S-adenosyl-L-methionine from L-methionine: step 1/1. In terms of biological role, catalyzes the formation of S-adenosylmethionine from methionine and ATP. This is S-adenosylmethionine synthase from Sulfurisphaera tokodaii (strain DSM 16993 / JCM 10545 / NBRC 100140 / 7) (Sulfolobus tokodaii).